The chain runs to 102 residues: Monothiol glutaredoxin-S8 (102 aa).

Positions 1-101 constitute a Glutaredoxin domain; the sequence is MEKIQKMISE…PMLKRFGALW (101 aa). [2Fe-2S] cluster is bound at residue Cys21. The Responsive for interaction with TGA factors signature appears at 99 to 102; sequence ALWL.

This sequence belongs to the glutaredoxin family. CC-type subfamily.

Its subcellular location is the cytoplasm. The protein localises to the nucleus. In terms of biological role, may only reduce GSH-thiol disulfides, but not protein disulfides. The sequence is that of Monothiol glutaredoxin-S8 (GRXS8) from Arabidopsis thaliana (Mouse-ear cress).